The sequence spans 233 residues: Large ribosomal subunit protein uL1 (233 aa).

This sequence belongs to the universal ribosomal protein uL1 family. In terms of assembly, part of the 50S ribosomal subunit.

Its function is as follows. Binds directly to 23S rRNA. The L1 stalk is quite mobile in the ribosome, and is involved in E site tRNA release. Functionally, protein L1 is also a translational repressor protein, it controls the translation of the L11 operon by binding to its mRNA. The protein is Large ribosomal subunit protein uL1 of Nautilia profundicola (strain ATCC BAA-1463 / DSM 18972 / AmH).